Here is a 208-residue protein sequence, read N- to C-terminus: Uracil phosphoribosyltransferase (208 aa).

Residues R78, R103, and 130–138 (DPMLATGGS) contribute to the 5-phospho-alpha-D-ribose 1-diphosphate site. Uracil is bound by residues I193 and 198–200 (GDA). D199 lines the 5-phospho-alpha-D-ribose 1-diphosphate pocket.

The protein belongs to the UPRTase family. The cofactor is Mg(2+).

It catalyses the reaction UMP + diphosphate = 5-phospho-alpha-D-ribose 1-diphosphate + uracil. It functions in the pathway pyrimidine metabolism; UMP biosynthesis via salvage pathway; UMP from uracil: step 1/1. With respect to regulation, allosterically activated by GTP. In terms of biological role, catalyzes the conversion of uracil and 5-phospho-alpha-D-ribose 1-diphosphate (PRPP) to UMP and diphosphate. This Shewanella woodyi (strain ATCC 51908 / MS32) protein is Uracil phosphoribosyltransferase.